A 45-amino-acid chain; its full sequence is U1-ctenitoxin-Pk1a (45 aa).

4 disulfide bridges follow: cysteine 3-cysteine 16, cysteine 10-cysteine 25, cysteine 15-cysteine 34, and cysteine 27-cysteine 32.

Expressed by the venom gland.

The protein localises to the secreted. Neurotoxin. Causes rapid general flaccid paralysis and death in mice at dose levels of 5 ug per mouse. The polypeptide is U1-ctenitoxin-Pk1a (Phoneutria keyserlingi (Brazilian wandering spider)).